Reading from the N-terminus, the 416-residue chain is Ferrochelatase, mitochondrial (416 aa).

The N-terminal 47 residues, 1–47 (MAAALRSAGVLLRDRLLYGGSRACQPRRCQSGAATAAAATETAQRAR), are a transit peptide targeting the mitochondrion. Positions 41-62 (ETAQRARSPKPQAQPGNRKPRT) are disordered. At lysine 50 the chain carries N6-acetyllysine. 3 residues coordinate protoporphyrin IX: arginine 108, tyrosine 116, and serine 123. At lysine 131 the chain carries N6-succinyllysine. Cysteine 189 is a binding site for [2Fe-2S] cluster. Residue histidine 223 is part of the active site. An N6-acetyllysine; alternate modification is found at lysine 283. Lysine 283 is subject to N6-succinyllysine; alternate. Aspartate 376 is a catalytic residue. The [2Fe-2S] cluster site is built by cysteine 396, cysteine 399, and cysteine 404. N6-acetyllysine; alternate is present on lysine 408. Position 408 is an N6-succinyllysine; alternate (lysine 408).

It belongs to the ferrochelatase family. As to quaternary structure, homodimer. Homotetramer. Interaction with PGRMC1; the interaction results in decreased FECH activity. Interacts with ABCB10 and SLC25A37; this interaction forms an oligomeric complex. Forms a complex with ABCB7 and ABCB10, where a dimeric FECH bridges ABCB7 and ABCB10 homodimers; this complex may be required for cellular iron homeostasis, mitochondrial function and heme biosynthesis. Interacts with ABCB7 and ABCB10. It depends on [2Fe-2S] cluster as a cofactor.

The protein localises to the mitochondrion inner membrane. It catalyses the reaction heme b + 2 H(+) = protoporphyrin IX + Fe(2+). The protein operates within porphyrin-containing compound metabolism; protoheme biosynthesis; protoheme from protoporphyrin-IX: step 1/1. Functionally, catalyzes the ferrous insertion into protoporphyrin IX and participates in the terminal step in the heme biosynthetic pathway. The chain is Ferrochelatase, mitochondrial from Bos taurus (Bovine).